Reading from the N-terminus, the 223-residue chain is UPF0441 protein YgiB (223 aa).

The span at 178–195 (TVPKTAMAPKPATTTTVT) shows a compositional bias: low complexity. The tract at residues 178–223 (TVPKTAMAPKPATTTTVTRGGFGESVAKQSTMQRSATGTSSRSMGG) is disordered. Residues 204-223 (AKQSTMQRSATGTSSRSMGG) show a composition bias toward polar residues.

It belongs to the UPF0441 family.

This chain is UPF0441 protein YgiB, found in Shigella dysenteriae serotype 1 (strain Sd197).